A 458-amino-acid chain; its full sequence is Bifunctional protein GlmU (458 aa).

Positions M1 to R229 are pyrophosphorylase. UDP-N-acetyl-alpha-D-glucosamine contacts are provided by residues L8–G11, K22, Q72, and G77–T78. D102 contributes to the Mg(2+) binding site. UDP-N-acetyl-alpha-D-glucosamine is bound by residues G139, E154, N169, and N227. Mg(2+) is bound at residue N227. Residues V230–N250 form a linker region. The interval G251–Q458 is N-acetyltransferase. The UDP-N-acetyl-alpha-D-glucosamine site is built by R332 and K350. The Proton acceptor role is filled by H362. Y365 and N376 together coordinate UDP-N-acetyl-alpha-D-glucosamine. The acetyl-CoA site is built by A379, S404, A422, and R439.

In the N-terminal section; belongs to the N-acetylglucosamine-1-phosphate uridyltransferase family. This sequence in the C-terminal section; belongs to the transferase hexapeptide repeat family. Homotrimer. It depends on Mg(2+) as a cofactor.

Its subcellular location is the cytoplasm. It catalyses the reaction alpha-D-glucosamine 1-phosphate + acetyl-CoA = N-acetyl-alpha-D-glucosamine 1-phosphate + CoA + H(+). It carries out the reaction N-acetyl-alpha-D-glucosamine 1-phosphate + UTP + H(+) = UDP-N-acetyl-alpha-D-glucosamine + diphosphate. It participates in nucleotide-sugar biosynthesis; UDP-N-acetyl-alpha-D-glucosamine biosynthesis; N-acetyl-alpha-D-glucosamine 1-phosphate from alpha-D-glucosamine 6-phosphate (route II): step 2/2. Its pathway is nucleotide-sugar biosynthesis; UDP-N-acetyl-alpha-D-glucosamine biosynthesis; UDP-N-acetyl-alpha-D-glucosamine from N-acetyl-alpha-D-glucosamine 1-phosphate: step 1/1. The protein operates within bacterial outer membrane biogenesis; LPS lipid A biosynthesis. Its function is as follows. Catalyzes the last two sequential reactions in the de novo biosynthetic pathway for UDP-N-acetylglucosamine (UDP-GlcNAc). The C-terminal domain catalyzes the transfer of acetyl group from acetyl coenzyme A to glucosamine-1-phosphate (GlcN-1-P) to produce N-acetylglucosamine-1-phosphate (GlcNAc-1-P), which is converted into UDP-GlcNAc by the transfer of uridine 5-monophosphate (from uridine 5-triphosphate), a reaction catalyzed by the N-terminal domain. The polypeptide is Bifunctional protein GlmU (Lactococcus lactis subsp. lactis (strain IL1403) (Streptococcus lactis)).